The primary structure comprises 64 residues: MPKMKNNKGAAKRFKKTAGGIKYKHATKRHILTKRTTKNKRQLRPNSLLPRCEVAAVARMLPYA.

It belongs to the bacterial ribosomal protein bL35 family.

This chain is Large ribosomal subunit protein bL35, found in Vibrio vulnificus (strain CMCP6).